Here is a 188-residue protein sequence, read N- to C-terminus: Large ribosomal subunit protein uL22 (188 aa).

The segment at 155–188 (STPEGAKKGKKKKGTKDAVEKSSKRVKTAATAAH) is disordered.

It belongs to the universal ribosomal protein uL22 family.

In Agriotes lineatus (Lined click beetle), this protein is Large ribosomal subunit protein uL22 (RpL17).